The sequence spans 513 residues: ATP synthase subunit alpha (513 aa).

169–176 lines the ATP pocket; it reads GDRQTGKT.

This sequence belongs to the ATPase alpha/beta chains family. In terms of assembly, F-type ATPases have 2 components, CF(1) - the catalytic core - and CF(0) - the membrane proton channel. CF(1) has five subunits: alpha(3), beta(3), gamma(1), delta(1), epsilon(1). CF(0) has three main subunits: a(1), b(2) and c(9-12). The alpha and beta chains form an alternating ring which encloses part of the gamma chain. CF(1) is attached to CF(0) by a central stalk formed by the gamma and epsilon chains, while a peripheral stalk is formed by the delta and b chains.

Its subcellular location is the cell inner membrane. It catalyses the reaction ATP + H2O + 4 H(+)(in) = ADP + phosphate + 5 H(+)(out). Its function is as follows. Produces ATP from ADP in the presence of a proton gradient across the membrane. The alpha chain is a regulatory subunit. This Shewanella denitrificans (strain OS217 / ATCC BAA-1090 / DSM 15013) protein is ATP synthase subunit alpha.